The chain runs to 59 residues: Large ribosomal subunit protein bL32c (59 aa).

The tract at residues 37–59 (SRSFSRGNEHPKPKGFSGQQANK) is disordered.

It belongs to the bacterial ribosomal protein bL32 family.

The protein resides in the plastid. Its subcellular location is the chloroplast. The protein is Large ribosomal subunit protein bL32c (rpl32) of Zea mays (Maize).